The sequence spans 282 residues: Large ribosomal subunit protein uL4c (282 aa).

The transit peptide at 1 to 49 directs the protein to the chloroplast; it reads MASSATAPNSLSFFSSSLFLSSSHQIPKTYISVSKLGSGRVSKPLSVSS. Residues 106-138 are disordered; the sequence is EVRGGGIKPYSQKKTGHARRGSQRTPLRPGGGV.

This sequence belongs to the universal ribosomal protein uL4 family. In terms of assembly, part of the 50S ribosomal subunit.

The protein localises to the plastid. The protein resides in the chloroplast. In terms of biological role, this protein binds directly and specifically to 23S rRNA. May play a role in plastid transcriptional regulation. This is Large ribosomal subunit protein uL4c (RPL4) from Arabidopsis thaliana (Mouse-ear cress).